The primary structure comprises 216 residues: Orotate phosphoribosyltransferase (216 aa).

Lysine 30 contacts 5-phospho-alpha-D-ribose 1-diphosphate. 38–39 (FF) lines the orotate pocket. 5-phospho-alpha-D-ribose 1-diphosphate contacts are provided by residues 75 to 76 (YK), arginine 102, lysine 103, lysine 106, histidine 108, and 128 to 136 (DDVITAGTA). Positions 132 and 160 each coordinate orotate.

It belongs to the purine/pyrimidine phosphoribosyltransferase family. PyrE subfamily. As to quaternary structure, homodimer. Requires Mg(2+) as cofactor.

It carries out the reaction orotidine 5'-phosphate + diphosphate = orotate + 5-phospho-alpha-D-ribose 1-diphosphate. It participates in pyrimidine metabolism; UMP biosynthesis via de novo pathway; UMP from orotate: step 1/2. Functionally, catalyzes the transfer of a ribosyl phosphate group from 5-phosphoribose 1-diphosphate to orotate, leading to the formation of orotidine monophosphate (OMP). The protein is Orotate phosphoribosyltransferase of Acinetobacter baumannii (strain AB307-0294).